Reading from the N-terminus, the 691-residue chain is MAAAAGDGGGEGGAGLGSAAGLGPGPGLRGQGPSAEAHEGAPDPMPAALHPEEVAARLQRMQRELSNRRKILVKNLPQDSNCQEVHDLLKDYDLKYCYVDRNKRTAFVTLLNGEQAQNAIQMFHQYSFRGKDLIVQLQPTDALLCITNVPISFTSEEFEELVRAYGNIERCFLVYSEVTGHSKGYGFVEYMKKDFAAKARLELLGRQLGASALFAQWMDVNLLASELIHSKCLCIDKLPSDYRDSEELLQIFSSVHKPVFCQLAQDEGSYVGGFAVVEYSTAEQAEEVQQAADGMTIKGSKVQVSFCAPGAPGRSTLAALIAAQRVMHSNQKGLLPEPNPVQIMKSLNNPAMLQVLLQPQLCGRAVKPAVLGTPHSLPHLMNPSISPAFLHLNKAHQSSVMGNTSNLFLQNLSHIPLAQQQLMKFENIHTNNKPGLLGEPPAVVLQTALGIGSVLPLKKELGHHHGEAHKTSSLIPTQTTITAGMGMLPFFPNQHIAGQAGPGHSNTQEKQPATVGMAEGNFSGSQPYLQSFPNLAAGSLLVGHHKQQQSQPKGTEISSGAASKNQTSLLGEPPKEIRLSKNPYLNLASVLPSVCLSSPASKTTLHKTGIASSILDAISQGSESQHALEKCIAYSPPFGDYAQVSSLRNEKRGSSYLISAPEGGSVECVDQHSQGTGAYYMETYLKKKRVY.

Residues 1–30 (MAAAAGDGGGEGGAGLGSAAGLGPGPGLRG) are compositionally biased toward gly residues. Positions 1–47 (MAAAAGDGGGEGGAGLGSAAGLGPGPGLRGQGPSAEAHEGAPDPMPA) are disordered. Position 2 is an N-acetylalanine (alanine 2). RRM domains follow at residues 69–140 (RKIL…LQPT), 142–220 (ALLC…WMDV), and 231–309 (KCLC…FCAP). Disordered regions lie at residues 492–522 (PNQH…EGNF) and 543–574 (GHHK…GEPP). Polar residues predominate over residues 548-569 (QQSQPKGTEISSGAASKNQTSL).

Interacts with PTBP1 and RAVER1.

It is found in the nucleus. It localises to the cytoplasm. Its function is as follows. May bind single-stranded nucleic acids. In Homo sapiens (Human), this protein is Ribonucleoprotein PTB-binding 2 (RAVER2).